The following is a 466-amino-acid chain: ATP synthase subunit beta (466 aa).

156-163 (GGAGVGKT) is an ATP binding site.

It belongs to the ATPase alpha/beta chains family. In terms of assembly, F-type ATPases have 2 components, CF(1) - the catalytic core - and CF(0) - the membrane proton channel. CF(1) has five subunits: alpha(3), beta(3), gamma(1), delta(1), epsilon(1). CF(0) has three main subunits: a(1), b(2) and c(9-12). The alpha and beta chains form an alternating ring which encloses part of the gamma chain. CF(1) is attached to CF(0) by a central stalk formed by the gamma and epsilon chains, while a peripheral stalk is formed by the delta and b chains.

The protein localises to the cell membrane. The catalysed reaction is ATP + H2O + 4 H(+)(in) = ADP + phosphate + 5 H(+)(out). Functionally, produces ATP from ADP in the presence of a proton gradient across the membrane. The catalytic sites are hosted primarily by the beta subunits. The polypeptide is ATP synthase subunit beta (Buchnera aphidicola subsp. Schizaphis graminum (strain Sg)).